Consider the following 94-residue polypeptide: Small ribosomal subunit protein uS19c (94 aa).

It belongs to the universal ribosomal protein uS19 family.

The protein resides in the plastid. It localises to the chloroplast. In terms of biological role, protein S19 forms a complex with S13 that binds strongly to the 16S ribosomal RNA. The sequence is that of Small ribosomal subunit protein uS19c from Cyanidioschyzon merolae (strain NIES-3377 / 10D) (Unicellular red alga).